The sequence spans 428 residues: MSYYLNSENHLDSGPIYVRENGQLHMVNLALDDVRSSLQKPRPFRLFPKGFSVELCMNREDDTAQKEKTDHFIFTYTREGNLRYSAKSLFSLVLGFISDNVDHIDSLIGFPEQIAEKLFSAAEARQKFTEPGAGLRALQKFTEAYGSLVLCSLCLRNRYLVISEKLEEIKSFRELTCLDLSCCKLGDEHELLEHLTNEALSSVTQLRLKDNCLSDAGVRKMTAPVRVMKRGLENLSLLDLSCNPEITDAGIGYLFSFRKLNCLDISGTGLKDIKAVKHKLQTHIGLVHSKVPLKEFDHSNCKTEGWADQIVLQWERVTLEAMKPQETLESRTAAQHFYGKRARTEAPGKYPLTEAHMNSSEKLQFYKEKAADCHGPLLKHEALSSQESKKSKKRAFEEPEKEQGSSSQTSKQKYVCLAVEDWDLLNSY.

LRR repeat units lie at residues 149–170, 174–195, 202–222, 234–255, and 259–280; these read VLCS…EEIK, ELTC…LEHL, SVTQ…RKMT, NLSL…GYLF, and KLNC…KHKL. Positions 379-412 are disordered; that stretch reads KHEALSSQESKKSKKRAFEEPEKEQGSSSQTSKQ. The segment covering 394–403 has biased composition (basic and acidic residues); that stretch reads RAFEEPEKEQ. Residues S406 and S407 each carry the phosphoserine modification.

It belongs to the LRRC42 family.

The sequence is that of Leucine-rich repeat-containing protein 42 (LRRC42) from Bos taurus (Bovine).